The following is a 433-amino-acid chain: Ligand-dependent corepressor (433 aa).

The disordered stretch occupies residues 1 to 147 (MQRMIQQFAA…GTREGFGHST (147 aa)). Positions 13-34 (TSKTSSTQDPSQPNSTKNQSLP) are enriched in polar residues. Low complexity predominate over residues 36 to 48 (ASPVTTSPTAATT). Ser42 carries the phosphoserine modification. Residues 53-57 (LSKLL) carry the Interaction with nuclear receptors motif. Position 63 is a phosphoserine (Ser63). Over residues 88–110 (KKSPCASSTSLSHSPGCSSTQGN) the composition is skewed to polar residues. Phosphoserine is present on Ser249. Lys254 participates in a covalent cross-link: Glycyl lysine isopeptide (Lys-Gly) (interchain with G-Cter in SUMO2). Positions 299 to 348 (QNRKSMLDAGPDSWGSDAEQSTSGQPYPTSDQEGDPGSKQPRKKRGRYRQ) are disordered. Over residues 316-329 (AEQSTSGQPYPTSD) the composition is skewed to polar residues. The Nuclear localization signal signature appears at 339 to 345 (PRKKRGR). An HTH psq-type domain is found at 340 to 392 (RKKRGRYRQYNSEILEEAISVVMSGKMSVSKAQSIYGIPHSTLEYKVKERLGT). Positions 368–388 (VSKAQSIYGIPHSTLEYKVKE) form a DNA-binding region, H-T-H motif. The tract at residues 393 to 412 (LKNPPKKKMKLMRSEGPDVS) is disordered. Residue Lys414 forms a Glycyl lysine isopeptide (Lys-Gly) (interchain with G-Cter in SUMO2) linkage.

As to quaternary structure, interacts with ESR1 and ESR2 in the presence of estradiol. Interacts with CTBP1, HDAC3 and HDAC6. Component of a large corepressor complex that contains about 20 proteins, including CTBP1, CTBP2, HDAC1 and HDAC2. Detected in heart and kidney.

The protein localises to the nucleus. Repressor of ligand-dependent transcription activation by various nuclear repressors. Repressor of ligand-dependent transcription activation by ESR1, ESR2, NR3C1, PGR, RARA, RARB, RARG, RXRA and VDR. May act as transcription activator that binds DNA elements with the sequence 5'-CCCTATCGATCGATCTCTACCT-3'. The polypeptide is Ligand-dependent corepressor (Lcor) (Mus musculus (Mouse)).